Reading from the N-terminus, the 397-residue chain is Fractalkine (397 aa).

The N-terminal stretch at 1–24 is a signal peptide; the sequence is MAPISLSWLLRLATFCHLTVLLAG. The tract at residues 25 to 100 is chemokine and involved in interaction with ITGAV:ITGB3 and ITGA4:ITGB1; the sequence is QHHGVTKCNI…RQAAALTRNG (76 aa). Over 25–341 the chain is Extracellular; it reads QHHGVTKCNI…PDAQAATRRQ (317 aa). 2 disulfide bridges follow: Cys32–Cys58 and Cys36–Cys74. Asn33 is a glycosylation site (N-linked (GlcNAc...) asparagine). Positions 101-341 are mucin-like stalk; the sequence is GTFEKQIGEV…PDAQAATRRQ (241 aa). Disordered regions lie at residues 128–265 and 289–309; these read EPEA…REEM and VPVS…SWTP. The span at 133-147 shows a compositional bias: polar residues; the sequence is GESSSLEPTPSSQEA. Thr183 is a glycosylation site (O-linked (GalNAc...) threonine). Residues 193 to 202 show a composition bias toward polar residues; the sequence is TAATWQSSAP. Over residues 219–243 the composition is skewed to low complexity; the sequence is PSTQDPSTQASTASSPAPEENAPSE. A glycan (O-linked (GalNAc...) serine) is linked at Ser253. An O-linked (GalNAc...) threonine glycan is attached at Thr329. The chain crosses the membrane as a helical span at residues 342-362; it reads AVGLLAFLGLLFCLGVAMFTY. Residues 363 to 397 lie on the Cytoplasmic side of the membrane; it reads QSLQGCPRKMAGEMAEGLRYIPRSCGSNSYVLVPV.

This sequence belongs to the intercrine delta family. Monomer. Forms a ternary complex with CX3CR1 and ITGAV:ITGB3 or ITGA4:ITGB1. As to quaternary structure, (Microbial infection) Interacts with pox virus crmD; this inhibits cell migration mediated by CX3CL1. In terms of assembly, (Microbial infection) Interacts (via N-terminus) with human cytomegalovirus (HHV-5) US28. (Microbial infection) Interacts with P.falciparum (strain 3D7) CBP1 and CBP2 (via their extracellular domains); the interaction mediates the adhesion of infected erythrocytes with endothelial cells. In terms of processing, a soluble short 95 kDa form may be released by proteolytic cleavage from the long membrane-anchored form. Post-translationally, O-glycosylated with core 1 or possibly core 8 glycans. As to expression, expressed in the seminal plasma, endometrial fluid and follicular fluid (at protein level). Small intestine, colon, testis, prostate, heart, brain, lung, skeletal muscle, kidney and pancreas. Most abundant in the brain and heart.

Its subcellular location is the cell membrane. The protein resides in the secreted. Chemokine that acts as a ligand for both CX3CR1 and integrins ITGAV:ITGB3 and ITGA4:ITGB1. The CX3CR1-CX3CL1 signaling exerts distinct functions in different tissue compartments, such as immune response, inflammation, cell adhesion and chemotaxis. Regulates leukocyte adhesion and migration processes at the endothelium. Can activate integrins in both a CX3CR1-dependent and CX3CR1-independent manner. In the presence of CX3CR1, activates integrins by binding to the classical ligand-binding site (site 1) in integrins. In the absence of CX3CR1, binds to a second site (site 2) in integrins which is distinct from site 1 and enhances the binding of other integrin ligands to site 1. In terms of biological role, the soluble form is chemotactic for T-cells and monocytes, but not for neutrophils. Its function is as follows. The membrane-bound form promotes adhesion of those leukocytes to endothelial cells. Functionally, (Microbial infection) Mediates the cytoadherence of erythrocytes infected with parasite P.falciparum (strain 3D7) with endothelial cells by interacting with P.falciparum CBP1 and CBP2 expressed at the surface of erythrocytes. The adhesion prevents the elimination of infected erythrocytes by the spleen. This Homo sapiens (Human) protein is Fractalkine.